Reading from the N-terminus, the 539-residue chain is Protein PNS1 (539 aa).

Residues 1-38 are disordered; it reads MPLNEKYERPPQPPPAYDPNHRPPSSSENSAAANVNDG. Residues 1-81 are Cytoplasmic-facing; it reads MPLNEKYERP…NDNKPRWNDW (81 aa). The span at 25-36 shows a compositional bias: low complexity; that stretch reads SSSENSAAANVN. The helical transmembrane segment at 82–102 threads the bilayer; sequence PFTIFFLCTVGGFIAIAAITL. Over 103-129 the chain is Extracellular; the sequence is RAWSQTYSSTGSGIYDGVNTGTLNTNA. Residues 130-150 traverse the membrane as a helical segment; sequence AILLVFVCIIALVFSVLGLTL. The Cytoplasmic segment spans residues 151–157; the sequence is CRIFPKQ. Residues 158–178 form a helical membrane-spanning segment; the sequence is FIYCGMVINLVASLGTAIMYM. The Extracellular portion of the chain corresponds to 179-182; it reads SLRY. A helical transmembrane segment spans residues 183–203; that stretch reads WSAGIVFLVFTFMTAWCYWGM. The Cytoplasmic segment spans residues 204–226; that stretch reads RSRIPLSVAVLKVVVDAMKKCPQ. Residues 227–247 traverse the membrane as a helical segment; it reads IFFVSFVGALVASAFGFLFSA. Residues 248–274 lie on the Extracellular side of the membrane; the sequence is VIVATYIKYDPNSSNGGCDVSGGSCSH. Residue Asn-259 is glycosylated (N-linked (GlcNAc...) asparagine). A helical membrane pass occupies residues 275-295; the sequence is SKLIGVLVVVFFCGYYISEVI. Topologically, residues 296-332 are cytoplasmic; that stretch reads RNVIHCVISGVFGSWYYMSKSDQGMPRWPAFGALKRA. Residues 333–353 form a helical membrane-spanning segment; sequence MTYSFGSICFGSLLVALIDLL. Residues 354–371 lie on the Extracellular side of the membrane; it reads RQILQMIRHDVTSSGGGQ. The helical transmembrane segment at 372 to 392 threads the bilayer; that stretch reads IAIQILFMVFDWIIGFLKWLA. Over 393–436 the chain is Cytoplasmic; that stretch reads EYFNHYAYSFIALYGKPYLRAAKETWYMLREKGMDALINDNLIN. The chain crosses the membrane as a helical span at residues 437–457; sequence IALGLFSMFASYMTALFTFLY. The Extracellular portion of the chain corresponds to 458-473; sequence LRFTSPQYNSNGAYNG. A helical transmembrane segment spans residues 474–494; it reads ALMAFSFVIALQICNIATEAI. At 495 to 539 the chain is on the cytoplasmic side; it reads RSGTATFFVALGNDPEVFHHSYPHRFDEIFRAYPDVLRKLSHQNV.

This sequence belongs to the CTL (choline transporter-like) family.

The protein resides in the cell membrane. Its function is as follows. Probably involved in transport through the plasma membrane. The protein is Protein PNS1 (PNS1) of Saccharomyces cerevisiae (strain ATCC 204508 / S288c) (Baker's yeast).